A 366-amino-acid chain; its full sequence is Nodulation protein NolL (366 aa).

The next 9 helical transmembrane spans lie at 27–47 (FVKGILIILVVLGHLLQLVIY), 62–82 (IYMFHMPLFMAISGYLASGTI), 98–118 (LLIPMLFWCALIETAKLAAFF), 140–160 (FLWAVLASFLLTKLFAAFNLL), 164–184 (ILCASAIVIALMPITLSIVPL), 212–232 (HKSLLMFSCWAVACLCFLDWG), 253–273 (VLLMFTGSAAAAAVAAQSLFH), 286–306 (LVAVELGQSTLLLYLVQGAVF), and 324–344 (IVVASAIGAAIFGAATAVLWI).

It belongs to the acyltransferase 3 family.

The protein localises to the cell membrane. Its function is as follows. Thought to be an acetyltransferase that modifies the fucose of the nod factor. The sequence is that of Nodulation protein NolL (nolL) from Sinorhizobium fredii (strain NBRC 101917 / NGR234).